We begin with the raw amino-acid sequence, 189 residues long: UPF0398 protein lp_1753 (189 aa).

Belongs to the UPF0398 family.

The sequence is that of UPF0398 protein lp_1753 from Lactiplantibacillus plantarum (strain ATCC BAA-793 / NCIMB 8826 / WCFS1) (Lactobacillus plantarum).